A 92-amino-acid chain; its full sequence is uncharacterized protein (92 aa).

This is an uncharacterized protein from Escherichia coli O157:H7.